The sequence spans 2346 residues: Nucleoprotein TPR (2346 aa).

Coiled-coil stretches lie at residues 38 to 190 (DEYC…HKEI), 217 to 366 (QLQS…NLES), 395 to 493 (YAKS…SRQV), and 565 to 596 (KMLLEQSKNHIRKLDARFAELEDLLTQKNNTV). The interval 622–649 (VDLDDSNLEPNDSALDTSEQPAANFEES) is disordered. Positions 629-642 (LEPNDSALDTSEQP) are enriched in polar residues. Coiled-coil stretches lie at residues 643-1158 (AANF…IEAL) and 1196-1247 (EEGR…DELN). The tract at residues 1187-1655 (LNASGLTAAE…SPRTANVKPM (469 aa)) is interacts with Mad1. Residues threonine 1259, threonine 1302, threonine 1338, and threonine 1390 each carry the phosphothreonine modification. Coiled-coil stretches lie at residues 1281-1536 (TDSN…KRTE) and 1579-1627 (SYDE…GSQQ). Polar residues-rich tracts occupy residues 1621 to 1649 (RQLGSQQSTKPSTSSVAEKGNISESSPRT) and 1657 to 1667 (GSATVQQSATV). Disordered regions lie at residues 1621–1677 (RQLG…ETPL), 1695–1768 (PTSQ…YMPS), and 1821–2346 (SPRV…GRFP). The segment covering 1702-1722 (AGSSTSTSSSSSSSSTSTTSA) has biased composition (low complexity). A compositionally biased stretch (polar residues) spans 1738 to 1747 (PQQQVHTTGS). Low complexity-rich tracts occupy residues 1752–1761 (SMASSSPTSS) and 1827–1878 (SSSS…PSSS). Polar residues predominate over residues 1879–1891 (NVTTTQAGCSSQG). Residues 1953–2023 (QEDDIQVVDS…QDNNEVDIEV (71 aa)) show a composition bias toward acidic residues. Over residues 2028 to 2080 (MQAQEESQSLDNQAIATASASTQENNQSQAITSGSGESSNPVTLPQAEASNWK) the composition is skewed to polar residues. The span at 2082–2091 (AAASTSTAAA) shows a compositional bias: low complexity. Polar residues-rich tracts occupy residues 2097-2110 (SVEIVSSPQVSNFC) and 2142-2159 (GAASASSPQKQSEAGESS). Basic and acidic residues predominate over residues 2165-2184 (KAADDGGDHADGTDNAREAD). Composition is skewed to polar residues over residues 2193 to 2223 (ATGQGEDSQPLGNDNPNVGTSQSEVSHNQAN) and 2302 to 2322 (RDTSPGNIQQNQMSANNNRFA). Residues 2323-2332 (QRTRNRRPIR) show a composition bias toward basic residues.

Belongs to the TPR family. Part of the nuclear pore complex (NPC). Associates with male-specific lethal (MSL) histone acetyltransferase complex. Interacts with Mad2; the interaction is required for efficient recruitment of Mad2 to unattached kinetochore and occurs in a microtubule-independent manner. Interacts with Mad1 (N-terminus). Interacts with Chro, east and Asator; the interaction is part of a macromolecular complex forming the spindle matrix during mitosis. Interacts with Nup98. In males, interacts with histone acetyltransferase mof. Post-translationally, mps1-mediated phosphorylation disrupts interaction with Mad1 during mitosis. Expressed in salivary glands, fat body, tracheal tube, esophageal tube and anterior ejaculatory duct (at protein level).

It is found in the nucleus. The protein localises to the nucleus matrix. Its subcellular location is the nucleus lamina. The protein resides in the nucleus envelope. It localises to the nucleus membrane. It is found in the nuclear pore complex. The protein localises to the cytoplasm. Its subcellular location is the cytoskeleton. The protein resides in the spindle. It localises to the chromosome. It is found in the centromere. The protein localises to the kinetochore. Its subcellular location is the midbody. Functionally, component of the nuclear pore complex (NPC), a complex required for the trafficking across the nuclear envelope. Functions as a scaffolding element in the nuclear phase of the NPC. Plays a role in chromosomal organization and gene expression regulation; stimulates transcription by promoting the formation of an open chromatin environment. Binds chromatin to nucleoporin-associated regions (NARs) that define transcriptionally active regions of the genome. Associates with extended chromosomal regions that alternate between domains of high density binding with those of low occupancy. Preferentially binds to NARs of the male X chromosome. In males, together with Nup153, required for the localization of the male-specific lethal (MSL) histone acetyltransferase complex to the X chromosome and therefore for the transcription of dosage compensation genes. In males, restrains dosage-compensated expression at the level of nascent transcription probably by interacting with the MSL complex and by modulating RNA Polymerase II phosphorylation status and activity. During mitosis forms a gel-like spindle matrix complex together with Skeletor (Skel), Chro, east, and Asator embedding the microtubule spindle apparatus. During interphase localizes Mad1 to the nuclear pore complex and thereby might act as a scaffold to assemble the Mad1-C-Mad2 complex, a heterotetramer that catalyzes the structural conversion of open-Mad2 (O-Mad2) into closed-Mad2 (C-Mad2) which is essential for spindle-assembly checkpoint (SAC). During the metaphase-anaphase transition and before chromosome congression, is phosphorylated by Msp-1; this modification releases Mad1 from the nuclear pore complex and thereby promotes assembly of SAC ensuring a timely and effective recruitment of spindle checkpoint proteins like Mad1, Mad2 and Mps1 to unattached kinetochores (KT). In testes, has a role in stem cell asymmetric division and maintenance via regulation of mitotic spindle assembly checkpoint (SAC) complex. This Drosophila melanogaster (Fruit fly) protein is Nucleoprotein TPR.